Reading from the N-terminus, the 84-residue chain is Small ribosomal subunit protein bS20 (84 aa).

The span at 62–72 shows a compositional bias: basic residues; that stretch reads KNKARRLKSRA. Residues 62–84 are disordered; sequence KNKARRLKSRAARWSNSATAASR. The segment covering 75–84 has biased composition (polar residues); sequence WSNSATAASR.

This sequence belongs to the bacterial ribosomal protein bS20 family.

Its function is as follows. Binds directly to 16S ribosomal RNA. This Mycoplasmoides gallisepticum (strain R(low / passage 15 / clone 2)) (Mycoplasma gallisepticum) protein is Small ribosomal subunit protein bS20.